The sequence spans 569 residues: 2-succinyl-5-enolpyruvyl-6-hydroxy-3-cyclohexene-1-carboxylate synthase (569 aa).

This sequence belongs to the TPP enzyme family. MenD subfamily. Homodimer. Mg(2+) serves as cofactor. The cofactor is Mn(2+). Requires thiamine diphosphate as cofactor.

It carries out the reaction isochorismate + 2-oxoglutarate + H(+) = 5-enolpyruvoyl-6-hydroxy-2-succinyl-cyclohex-3-ene-1-carboxylate + CO2. The protein operates within quinol/quinone metabolism; 1,4-dihydroxy-2-naphthoate biosynthesis; 1,4-dihydroxy-2-naphthoate from chorismate: step 2/7. It functions in the pathway quinol/quinone metabolism; menaquinone biosynthesis. Its function is as follows. Catalyzes the thiamine diphosphate-dependent decarboxylation of 2-oxoglutarate and the subsequent addition of the resulting succinic semialdehyde-thiamine pyrophosphate anion to isochorismate to yield 2-succinyl-5-enolpyruvyl-6-hydroxy-3-cyclohexene-1-carboxylate (SEPHCHC). This Shewanella sediminis (strain HAW-EB3) protein is 2-succinyl-5-enolpyruvyl-6-hydroxy-3-cyclohexene-1-carboxylate synthase.